The chain runs to 480 residues: Proline--tRNA ligase (480 aa).

The protein belongs to the class-II aminoacyl-tRNA synthetase family. ProS type 3 subfamily. Homodimer.

It is found in the cytoplasm. It catalyses the reaction tRNA(Pro) + L-proline + ATP = L-prolyl-tRNA(Pro) + AMP + diphosphate. Functionally, catalyzes the attachment of proline to tRNA(Pro) in a two-step reaction: proline is first activated by ATP to form Pro-AMP and then transferred to the acceptor end of tRNA(Pro). The protein is Proline--tRNA ligase of Pyrococcus horikoshii (strain ATCC 700860 / DSM 12428 / JCM 9974 / NBRC 100139 / OT-3).